A 1957-amino-acid polypeptide reads, in one-letter code: [F-actin]-monooxygenase MICAL2 (1957 aa).

Residues 2–494 are monooxygenase domain; sequence GENEDEKQAQ…KHLYITKELE (493 aa). Residues cysteine 97, 116–118, 123–125, phenylalanine 183, tyrosine 298, and aspartate 398 contribute to the FAD site; these read EKR and RNN. Positions 516 to 619 constitute a Calponin-homology (CH) domain; that stretch reads DIRPSKLLTW…MVMYLSKFYE (104 aa). The residue at position 631 (serine 631) is a Phosphoserine. Residues 660 to 681 carry the Nuclear localization signal motif; sequence RKRTPRVDGQTGENDMNKRRRK. 2 disordered regions span residues 660-714 and 886-942; these read RKRT…NQNK and QNKL…HPSH. Over residues 687 to 714 the composition is skewed to polar residues; it reads DEPSNFSSRSLGSNQECGSSKEGGNQNK. The span at 899–910 shows a compositional bias: pro residues; that stretch reads PPSPPSRLPSPD. Over residues 911–925 the composition is skewed to low complexity; it reads PAASSSPSTVDSASP. In terms of domain architecture, LIM zinc-binding spans 1000 to 1062; sequence DTCYFCKKRV…KPHFIHCKTN (63 aa). Positions 1002, 1005, 1023, 1026, 1029, 1032, 1052, and 1055 each coordinate Zn(2+). 6 disordered regions span residues 1070–1143, 1168–1243, 1258–1345, 1361–1431, 1467–1626, and 1675–1779; these read AELK…PSEW, SEDS…TPSK, VNKR…LYLP, GEDG…EGGP, KAGE…SPPC, and ESRQ…KEKK. The segment covering 1185-1195 has biased composition (basic and acidic residues); sequence SHTEPCEEKPW. A compositionally biased stretch (polar residues) spans 1232-1243; sequence RANSFQSPTPSK. A compositionally biased stretch (low complexity) spans 1275–1294; sequence LPSSSSHSSSPPSSSSTSVS. A compositionally biased stretch (polar residues) spans 1302–1316; it reads SPPQMTASEPLSQVS. The interval 1324–1363 is interaction with MAPK1; sequence TPNFRRRAVAQGAPREIPLYLPHHPKPEWAEYCLVSPGED. 2 stretches are compositionally biased toward basic and acidic residues: residues 1388-1402 and 1413-1431; these read SNHR…KDRS and GEDR…EGGP. Low complexity predominate over residues 1485-1496; it reads VLKPVRPLLLPR. A compositionally biased stretch (basic and acidic residues) spans 1552–1562; that stretch reads GGKKAWAKQES. The span at 1570-1579 shows a compositional bias: polar residues; the sequence is CTRSFSLRKT. Serine 1688 carries the post-translational modification Phosphoserine. Over residues 1718 to 1733 the composition is skewed to pro residues; it reads APPPPPPPPPPPPPPT. Residues 1751-1762 are compositionally biased toward low complexity; the sequence is ASSSASSTSSSS. The bMERB domain occupies 1796 to 1945; that stretch reads KQEELKRLYK…EKAEDQHFES (150 aa).

It belongs to the Mical family. As to quaternary structure, interacts with PLXNA4. Interacts with RAB1B. Interacts with MAPK1/ERK2. Interacts with RAB35, RAB8A, RAB10, RAB13 and RAB15 (in their GTP-bound forms); binding to RAB35 is of low affinity compared to other Rab proteins; at least in case of RAB8A may bind 2 molecules of RAB8A simultaneously through a high and a low affinity binding site, respectively. May interact with MAPK1/ERK2. Interacts with CORO1C; this interaction recruits MICAL2 to the actin filaments. Requires FAD as cofactor.

It localises to the nucleus. The protein resides in the cytoplasm. The enzyme catalyses L-methionyl-[F-actin] + NADPH + O2 + H(+) = L-methionyl-(R)-S-oxide-[F-actin] + NADP(+) + H2O. Its activity is regulated as follows. Specifically inhibited by CCG-1423, a small molecule inhibitor of SRF:MKL1/MRTF-A-dependent transcription. In terms of biological role, methionine monooxygenase that promotes depolymerization of F-actin by mediating oxidation of residues 'Met-44' and 'Met-47' on actin to form methionine-sulfoxide, resulting in actin filament disassembly and preventing repolymerization. Regulates the disassembly of branched actin networks also by oxidizing ARP3B-containing ARP2/3 complexes leading to ARP3B dissociation from the network. Acts as a key regulator of the SRF signaling pathway elicited by nerve growth factor and serum: mediates oxidation and subsequent depolymerization of nuclear actin, leading to increase MKL1/MRTF-A presence in the nucleus and promote SRF:MKL1/MRTF-A-dependent gene transcription. Does not activate SRF:MKL1/MRTF-A through RhoA. This Homo sapiens (Human) protein is [F-actin]-monooxygenase MICAL2.